Consider the following 281-residue polypeptide: Transcription factor HES-1 (281 aa).

Residues 1-44 (MPADIMEKNSSSPVAATPASVNTTPDKPKTASEHRKSSKPIMEK) form a disordered region. The span at 10-21 (SSSPVAATPASV) shows a compositional bias: low complexity. Positions 26-35 (DKPKTASEHR) are enriched in basic and acidic residues. The 58-residue stretch at 34–91 (HRKSSKPIMEKRRRARINESLSQLKTLILDALKKDSSRHSKLEKADILEMTVKHLRNL) folds into the bHLH domain. Residues 110–143 (YRAGFSECMNEVTRFLSTCEGVNTEVRTRLLGHL) form the Orange domain. Disordered regions lie at residues 158-206 (QAHP…PCKL) and 255-281 (TSVGPNAVSPSSGSSLTADSMWRPWRN). 2 stretches are compositionally biased toward pro residues: residues 164-174 (QAPPPPPPSGP) and 182-201 (FAPPPPLVPIPGGAAPPPGS). A compositionally biased stretch (polar residues) spans 255–272 (TSVGPNAVSPSSGSSLTA). The short motif at 276–279 (WRPW) is the WRPW motif element.

Interacts with SIRT1. Interacts weakly with TLE2. Interacts with HES6. Transcription repression requires formation of a complex with a corepressor protein of the Groucho/TLE family. Interacts (via WPRW motif) with TLE1. Interacts with an FA complex, composed of FANCA, FANCF, FANCG and FANCL, but not of FANCC, nor FANCE. Present in all tissues examined but highest in epithelial cells and in mesoderm-derived tissues such as embryonal muscle cells.

It is found in the nucleus. Transcriptional repressor of genes that require a bHLH protein for their transcription. May act as a negative regulator of myogenesis by inhibiting the functions of MYOD1 and ASH1. Binds DNA on N-box motifs: 5'-CACNAG-3' with high affinity and on E-box motifs: 5'-CANNTG-3' with low affinity. May play a role in a functional FA core complex response to DNA cross-link damage, being required for the stability and nuclear localization of FA core complex proteins, as well as for FANCD2 monoubiquitination in response to DNA damage. The polypeptide is Transcription factor HES-1 (Hes1) (Rattus norvegicus (Rat)).